Here is a 953-residue protein sequence, read N- to C-terminus: Lysosomal alpha-glucosidase (953 aa).

An N-terminal signal peptide occupies residues 1 to 27 (MNIRKPLCSNSVVGACTLISLTTAVIL). The propeptide occupies 28-69 (GHLMLRELMLLPQDLHESSSGLWKTYRPHHQEGYKPGPLHIQ). One can recognise a P-type domain in the interval 80-131 (TQCDVPPSSRFDCAPDKGISQEQCEARGCCYVPAGQVLKEPQIGQPWCFFPP). 3 cysteine pairs are disulfide-bonded: Cys82/Cys109, Cys92/Cys108, and Cys103/Cys127. N-linked (GlcNAc...) asparagine glycosylation is found at Asn140, Asn233, and Asn390. Position 404 (Asp404) interacts with substrate. A glycan (N-linked (GlcNAc...) asparagine) is linked at Asn470. Asp518 serves as the catalytic Nucleophile. Glu521 is an active-site residue. An intrachain disulfide couples Cys533 to Cys558. Substrate contacts are provided by Arg600 and Asp616. Cysteines 647 and 658 form a disulfide. His674 provides a ligand contact to substrate. N-linked (GlcNAc...) asparagine glycans are attached at residues Asn883, Asn926, and Asn933.

The protein belongs to the glycosyl hydrolase 31 family.

It is found in the lysosome. The protein localises to the lysosome membrane. The enzyme catalyses Hydrolysis of terminal, non-reducing (1-&gt;4)-linked alpha-D-glucose residues with release of alpha-D-glucose.. Its function is as follows. Essential for the degradation of glycogen in lysosomes. Has highest activity on alpha-1,4-linked glycosidic linkages, but can also hydrolyze alpha-1,6-linked glucans. In Mus musculus (Mouse), this protein is Lysosomal alpha-glucosidase (Gaa).